The chain runs to 333 residues: Alpha-N-acetylgalactosaminide alpha-2,6-sialyltransferase 6 (333 aa).

Polar residues predominate over residues 1–12; the sequence is MACSRPPSQCEP. The segment at 1–26 is disordered; that stretch reads MACSRPPSQCEPTSLPPGPPAGRRHL. Topologically, residues 1-43 are cytoplasmic; that stretch reads MACSRPPSQCEPTSLPPGPPAGRRHLPLSRRRREMSSNKEQRS. Residues 44 to 64 form a helical; Signal-anchor for type II membrane protein membrane-spanning segment; it reads AVFVILFALITILILYSSNSA. Residues 65 to 333 lie on the Lumenal side of the membrane; it reads NEVFHYGSLR…GITFSHPSWT (269 aa). N-linked (GlcNAc...) asparagine glycosylation is present at Asn-98. A disulfide bridge connects residues Cys-108 and Cys-256.

The protein belongs to the glycosyltransferase 29 family. In terms of tissue distribution, expressed in kidney, in proximal tubule epithelial cells. Expressed in colon cell lines.

The protein localises to the golgi apparatus membrane. It catalyses the reaction a ganglioside GM1b (d18:1(4E)) + CMP-N-acetyl-beta-neuraminate = a ganglioside GD1alpha (d18:1(4E)) + CMP + H(+). It carries out the reaction N-acetyl-alpha-neuraminosyl-(2-&gt;3)-beta-D-galactosyl-(1-&gt;3)-N-acetyl-beta-D-glucosaminyl-(1-&gt;3)-beta-D-galactosyl-(1-&gt;4)-beta-D-glucosyl-(1&lt;-&gt;1')-N-acyl-sphing-4-enine + CMP-N-acetyl-beta-neuraminate = N-acetyl-alpha-neuraminosyl-(2-&gt;3)-beta-D-galactosyl-(1-&gt;3)-[N-acetyl-alpha-neuraminosyl-(2-&gt;6)]-N-acetyl-beta-D-glucosaminyl-(1-&gt;3)-beta-D-galactosyl-(1-&gt;4)-beta-D-glucosyl-(1&lt;-&gt;1')-N-acyl-sphing-4-enine + CMP + H(+). The enzyme catalyses a globoside MSGG + CMP-N-acetyl-beta-neuraminate = a globoside DSGG + CMP + H(+). The catalysed reaction is a ganglioside GD1a (d18:1(4E)) + CMP-N-acetyl-beta-neuraminate = a ganglioside GT1aalpha (d18:1(4E)) + CMP + H(+). It catalyses the reaction a ganglioside GT1b (d18:1(4E)) + CMP-N-acetyl-beta-neuraminate = a ganglioside GQ1balpha (d18:1(4E)) + CMP + H(+). It carries out the reaction 3-O-[alpha-Neu5Ac-(2-&gt;3)-beta-D-Gal-(1-&gt;3)-alpha-D-GalNAc]-L-Ser-[protein] + CMP-N-acetyl-beta-neuraminate = a 3-O-{alpha-Neu5Ac-(2-&gt;3)-beta-D-Gal-(1-&gt;3)-[alpha-Neu5Ac-(2-&gt;6)]-alpha-D-GalNAc}-L-seryl-[protein] + CMP + H(+). The enzyme catalyses 3-O-[alpha-Neu5Ac-(2-&gt;3)-beta-D-Gal-(1-&gt;3)-alpha-D-GalNAc]-L-Thr-[protein] + CMP-N-acetyl-beta-neuraminate = a 3-O-{alpha-Neu5Ac-(2-&gt;3)-beta-D-Gal-(1-&gt;3)-[alpha-Neu5Ac-(2-&gt;6)]-alpha-D-GalNAc}-L-threonyl-[protein] + CMP + H(+). Its function is as follows. Transfers the sialyl group (N-acetyl-alpha-neuraminyl or NeuAc) from CMP-NeuAc onto glycoproteins and glycolipids, forming an alpha-2,6-linkage. Produces branched type disialyl structures by transfer of a sialyl group onto the GalNAc or GlcNAc residue inside backbone core chains having a terminal sialic acid with an alpha-2,3-linkage on Gal. ST6GalNAcVI prefers glycolipids to glycoproteins, predominantly catalyzing the biosynthesis of ganglioside GD1alpha from GM1b. Besides GMb1, MSGG and other glycolipids, it shows activity towards sialyl Lc4Cer generating disialyl Lc4Cer, which can lead to the synthesis of disialyl Lewis a (Le(a)), suggested to be a cancer-associated antigen. Also has activity toward GD1a and GT1b, and can generate DSGG (disialylgalactosylgloboside) from MSGG (monosialylgalactosylgloboside). In Homo sapiens (Human), this protein is Alpha-N-acetylgalactosaminide alpha-2,6-sialyltransferase 6 (ST6GALNAC6).